The primary structure comprises 356 residues: Beta-hexosaminidase (356 aa).

Residues aspartate 75, arginine 83, arginine 150, and 180-181 (KH) each bind substrate. Histidine 193 acts as the Proton donor/acceptor in catalysis. The active-site Nucleophile is the aspartate 264.

Belongs to the glycosyl hydrolase 3 family. NagZ subfamily.

The protein resides in the cytoplasm. The enzyme catalyses Hydrolysis of terminal non-reducing N-acetyl-D-hexosamine residues in N-acetyl-beta-D-hexosaminides.. Its pathway is cell wall biogenesis; peptidoglycan recycling. Plays a role in peptidoglycan recycling by cleaving the terminal beta-1,4-linked N-acetylglucosamine (GlcNAc) from peptide-linked peptidoglycan fragments, giving rise to free GlcNAc, anhydro-N-acetylmuramic acid and anhydro-N-acetylmuramic acid-linked peptides. The chain is Beta-hexosaminidase from Aromatoleum aromaticum (strain DSM 19018 / LMG 30748 / EbN1) (Azoarcus sp. (strain EbN1)).